Here is an 81-residue protein sequence, read N- to C-terminus: RNA-binding protein Hfq (81 aa).

The Sm domain occupies 10-70; the sequence is DLFLNSVRKS…ISTIMPSQPV (61 aa).

This sequence belongs to the Hfq family. Homohexamer.

RNA chaperone that binds small regulatory RNA (sRNAs) and mRNAs to facilitate mRNA translational regulation in response to envelope stress, environmental stress and changes in metabolite concentrations. Also binds with high specificity to tRNAs. The chain is RNA-binding protein Hfq from Mesorhizobium japonicum (strain LMG 29417 / CECT 9101 / MAFF 303099) (Mesorhizobium loti (strain MAFF 303099)).